A 243-amino-acid polypeptide reads, in one-letter code: MILFPAIDLKDGQCVRLVHGLMDQATVFNDDPAAQARAFEEAGFEYIHLVDLNGAFEGKPVNAAAVESILAAISIPAQLGGGIRDLATIEMWLEKGVRRVIIGTAAVKNPALVIEACRKFPGRIAVGLDAKGGRVATEGWADVSDLTVLDMAGRFEDAGVAAIIYTDIDRDGALQGLNIEATVSLADAISIPVIASGGLSSIEDLKKLIAANCSGIEGAISGRALYDGRLDPSEALKLLRGVA.

Residue D8 is the Proton acceptor of the active site. D129 serves as the catalytic Proton donor.

This sequence belongs to the HisA/HisF family.

The protein resides in the cytoplasm. It carries out the reaction 1-(5-phospho-beta-D-ribosyl)-5-[(5-phospho-beta-D-ribosylamino)methylideneamino]imidazole-4-carboxamide = 5-[(5-phospho-1-deoxy-D-ribulos-1-ylimino)methylamino]-1-(5-phospho-beta-D-ribosyl)imidazole-4-carboxamide. It functions in the pathway amino-acid biosynthesis; L-histidine biosynthesis; L-histidine from 5-phospho-alpha-D-ribose 1-diphosphate: step 4/9. The polypeptide is 1-(5-phosphoribosyl)-5-[(5-phosphoribosylamino)methylideneamino] imidazole-4-carboxamide isomerase (Parvibaculum lavamentivorans (strain DS-1 / DSM 13023 / NCIMB 13966)).